The sequence spans 150 residues: Large ribosomal subunit protein uL15 (150 aa).

Residues 1 to 52 (MITLNTLKDSTRKRKPRKRVGRGIGSKHGKTCGRGEKGAGARSGYKRRLGKE) are disordered. Over residues 11–31 (TRKRKPRKRVGRGIGSKHGKT) the composition is skewed to basic residues.

It belongs to the universal ribosomal protein uL15 family. In terms of assembly, part of the 50S ribosomal subunit.

Functionally, binds to the 23S rRNA. The chain is Large ribosomal subunit protein uL15 from Protochlamydia amoebophila (strain UWE25).